Reading from the N-terminus, the 91-residue chain is UPF0358 protein SAS1047 (91 aa).

It belongs to the UPF0358 family.

This Staphylococcus aureus (strain MSSA476) protein is UPF0358 protein SAS1047.